A 442-amino-acid chain; its full sequence is Serine--tRNA ligase (442 aa).

244–246 (TAE) contacts L-serine. Residue 275-277 (RAE) coordinates ATP. Residue E298 coordinates L-serine. 365 to 368 (EISS) lines the ATP pocket. S400 lines the L-serine pocket.

Belongs to the class-II aminoacyl-tRNA synthetase family. Type-1 seryl-tRNA synthetase subfamily. In terms of assembly, homodimer. The tRNA molecule binds across the dimer.

It localises to the cytoplasm. The enzyme catalyses tRNA(Ser) + L-serine + ATP = L-seryl-tRNA(Ser) + AMP + diphosphate + H(+). It carries out the reaction tRNA(Sec) + L-serine + ATP = L-seryl-tRNA(Sec) + AMP + diphosphate + H(+). It participates in aminoacyl-tRNA biosynthesis; selenocysteinyl-tRNA(Sec) biosynthesis; L-seryl-tRNA(Sec) from L-serine and tRNA(Sec): step 1/1. Functionally, catalyzes the attachment of serine to tRNA(Ser). Is also able to aminoacylate tRNA(Sec) with serine, to form the misacylated tRNA L-seryl-tRNA(Sec), which will be further converted into selenocysteinyl-tRNA(Sec). This chain is Serine--tRNA ligase, found in Bradyrhizobium sp. (strain BTAi1 / ATCC BAA-1182).